We begin with the raw amino-acid sequence, 262 residues long: tRNA pseudouridine synthase A (262 aa).

The Nucleophile role is filled by Asp51. Residue Tyr109 participates in substrate binding.

This sequence belongs to the tRNA pseudouridine synthase TruA family. In terms of assembly, homodimer.

The enzyme catalyses uridine(38/39/40) in tRNA = pseudouridine(38/39/40) in tRNA. Its function is as follows. Formation of pseudouridine at positions 38, 39 and 40 in the anticodon stem and loop of transfer RNAs. This is tRNA pseudouridine synthase A from Glaesserella parasuis serovar 5 (strain SH0165) (Haemophilus parasuis).